The chain runs to 621 residues: Archaeal Lon protease (621 aa).

Residues 1–117 (MNEEVREILG…YKEEAMKKAQ (117 aa)) lie on the Cytoplasmic side of the membrane. ATP is bound at residue 54–61 (GSPGTGKS). Residues 118–136 (ARNFLIFTLVFLVIGYTVL) form a helical membrane-spanning segment. Residues 137–141 (TNPGN) lie on the Extracellular side of the membrane. Residues 142–160 (LIWGIIAAVLILMMSRYFI) form a helical membrane-spanning segment. Topologically, residues 161 to 621 (PREDRNVPKL…KFKELELAAV (461 aa)) are cytoplasmic. Positions 423 to 602 (GYEVGRVNGL…NEVLEHVLED (180 aa)) constitute a Lon proteolytic domain. Catalysis depends on residues Ser-509 and Lys-552.

This sequence belongs to the peptidase S16 family. Archaeal LonB subfamily. As to quaternary structure, homohexamer. Organized in a ring with a central cavity.

It localises to the cell membrane. Its function is as follows. ATP-dependent serine protease that mediates the selective degradation of mutant and abnormal proteins as well as certain short-lived regulatory proteins. Degrades polypeptides processively. The protein is Archaeal Lon protease of Archaeoglobus fulgidus (strain ATCC 49558 / DSM 4304 / JCM 9628 / NBRC 100126 / VC-16).